Consider the following 148-residue polypeptide: 3-hydroxyacyl-[acyl-carrier-protein] dehydratase FabZ (148 aa).

His-50 is a catalytic residue.

This sequence belongs to the thioester dehydratase family. FabZ subfamily.

It localises to the cytoplasm. The enzyme catalyses a (3R)-hydroxyacyl-[ACP] = a (2E)-enoyl-[ACP] + H2O. In terms of biological role, involved in unsaturated fatty acids biosynthesis. Catalyzes the dehydration of short chain beta-hydroxyacyl-ACPs and long chain saturated and unsaturated beta-hydroxyacyl-ACPs. The chain is 3-hydroxyacyl-[acyl-carrier-protein] dehydratase FabZ from Lactobacillus helveticus (strain DPC 4571).